A 111-amino-acid chain; its full sequence is Cytochrome bo(3) ubiquinol oxidase subunit 4 (111 aa).

At 1–17 (MSSAAHDNHGAGHGSLG) the chain is on the cytoplasmic side. The helical transmembrane segment at 18–38 (SYAIGFVLSVILTAIPFYMVM) threads the bilayer. Topologically, residues 39-46 (DGGFSRHA) are periplasmic. Residues 47-67 (TILTMVVLGLVQVVVHLICFL) form a helical membrane-spanning segment. Topologically, residues 68-80 (HMNMSSEGRWNVM) are cytoplasmic. Residues 81-101 (AFIFTVIVILLVVGLSLWIIF) form a helical membrane-spanning segment. At 102–111 (SADMLMMPMP) the chain is on the periplasmic side.

The protein belongs to the cytochrome c oxidase bacterial subunit 4 family. As to quaternary structure, heterooctamer of two A chains, two B chains, two C chains and two D chains.

It is found in the cell inner membrane. Cytochrome bo(3) ubiquinol terminal oxidase is the component of the aerobic respiratory chain of E.coli that predominates when cells are grown at high aeration. Has proton pump activity across the membrane in addition to electron transfer, pumping 2 protons/electron. The protein is Cytochrome bo(3) ubiquinol oxidase subunit 4 (cyoD) of Pseudomonas aeruginosa (strain ATCC 15692 / DSM 22644 / CIP 104116 / JCM 14847 / LMG 12228 / 1C / PRS 101 / PAO1).